Here is a 299-residue protein sequence, read N- to C-terminus: ATP phosphoribosyltransferase (299 aa).

The protein belongs to the ATP phosphoribosyltransferase family. Long subfamily. As to quaternary structure, equilibrium between an active dimeric form, an inactive hexameric form and higher aggregates. Interconversion between the various forms is largely reversible and is influenced by the natural substrates and inhibitors of the enzyme. Mg(2+) serves as cofactor.

Its subcellular location is the cytoplasm. The enzyme catalyses 1-(5-phospho-beta-D-ribosyl)-ATP + diphosphate = 5-phospho-alpha-D-ribose 1-diphosphate + ATP. The protein operates within amino-acid biosynthesis; L-histidine biosynthesis; L-histidine from 5-phospho-alpha-D-ribose 1-diphosphate: step 1/9. Its activity is regulated as follows. Feedback inhibited by histidine. Catalyzes the condensation of ATP and 5-phosphoribose 1-diphosphate to form N'-(5'-phosphoribosyl)-ATP (PR-ATP). Has a crucial role in the pathway because the rate of histidine biosynthesis seems to be controlled primarily by regulation of HisG enzymatic activity. This chain is ATP phosphoribosyltransferase, found in Shigella dysenteriae serotype 1 (strain Sd197).